The primary structure comprises 135 residues: Large ribosomal subunit protein mL41 (135 aa).

The N-terminal 13 residues, 1 to 13 (MGFLTAVTQGLVR), are a transit peptide targeting the mitochondrion.

It belongs to the mitochondrion-specific ribosomal protein mL41 family. In terms of assembly, component of the mitochondrial ribosome large subunit (39S) which comprises a 16S rRNA and about 50 distinct proteins. Interacts with BCL2.

The protein resides in the mitochondrion. Functionally, component of the mitochondrial ribosome large subunit. Also involved in apoptosis and cell cycle. Enhances p53/TP53 stability, thereby contributing to p53/TP53-induced apoptosis in response to growth-inhibitory condition. Enhances p53/TP53 translocation to the mitochondria. Has the ability to arrest the cell cycle at the G1 phase, possibly by stabilizing the CDKN1A and CDKN1B (p27Kip1) proteins. The protein is Large ribosomal subunit protein mL41 (Mrpl41) of Mus musculus (Mouse).